The sequence spans 399 residues: Bombesin receptor subtype-3 (399 aa).

At 1 to 41 the chain is on the extracellular side; sequence MSQRQPQSPNQTLISITNDTETSSSAVSNDTTPKGWTGDNS. N-linked (GlcNAc...) asparagine glycosylation is found at Asn-10, Asn-18, and Asn-29. Residues 42–63 form a helical membrane-spanning segment; it reads PGIEALCAIYITYAVIISVGIL. Residues 64-82 are Cytoplasmic-facing; sequence GNAILIKVFFKTKSMQTVP. Residues 83–103 traverse the membrane as a helical segment; the sequence is NIFITSLAFGDLLLLLTCVPV. Topologically, residues 104–121 are extracellular; the sequence is DATHYLAEGWLFGKVGCK. A disulfide bridge links Cys-120 with Cys-203. The helical transmembrane segment at 122-143 threads the bilayer; sequence VLSFIRLTSVGVSVFTLTILSA. Topologically, residues 144-163 are cytoplasmic; that stretch reads DRYKAVVKPLERQPSNAILK. A helical transmembrane segment spans residues 164–184; the sequence is TCAKAGGIWIMAMIFALPEAI. The Extracellular portion of the chain corresponds to 185-220; that stretch reads FSNVYTFQDPNRNVTFESCNSYPISERLLQEIHSLL. A helical membrane pass occupies residues 221–241; that stretch reads CFLVFYIIPLSIISVYYSLIA. The Cytoplasmic segment spans residues 242 to 272; that stretch reads RTLYKSTLNIPTEEQSHARKQIESRKRIAKT. The helical transmembrane segment at 273–293 threads the bilayer; it reads VLVLVALFALCWLPNHLLYLY. At 294-313 the chain is on the extracellular side; sequence HSFTYESYAEPSDVPFVVTI. The helical transmembrane segment at 314-333 threads the bilayer; the sequence is FSRVLAFSNSCVNPFALYWL. Residues 334–399 lie on the Cytoplasmic side of the membrane; that stretch reads SKTFQKHFKA…STAKKGEDKV (66 aa). A lipid anchor (S-palmitoyl cysteine) is attached at Cys-347.

The protein belongs to the G-protein coupled receptor 1 family. As to quaternary structure, interacts with C6orf89.

It is found in the cell membrane. Functionally, role in sperm cell division, maturation, or function. This receptor mediates its action by association with G proteins that activate a phosphatidylinositol-calcium second messenger system. The protein is Bombesin receptor subtype-3 (Brs3) of Rattus norvegicus (Rat).